Here is a 319-residue protein sequence, read N- to C-terminus: Cytochrome c biogenesis protein CcsA (319 aa).

Transmembrane regions (helical) follow at residues 9–29, 44–64, 71–91, 143–163, 225–245, 259–273, and 286–306; these read ILTH…LITL, GVIG…AYSG, LYES…FPYF, MVLG…LLVI, IISL…VWAN, TWAF…IYLH, and AIVA…VNLL.

Belongs to the CcmF/CycK/Ccl1/NrfE/CcsA family. May interact with Ccs1.

It localises to the plastid. It is found in the chloroplast thylakoid membrane. Its function is as follows. Required during biogenesis of c-type cytochromes (cytochrome c6 and cytochrome f) at the step of heme attachment. This chain is Cytochrome c biogenesis protein CcsA, found in Oenothera glazioviana (Large-flowered evening primrose).